Consider the following 214-residue polypeptide: Small ribosomal subunit protein uS2 (214 aa).

This sequence belongs to the universal ribosomal protein uS2 family.

In Thermofilum pendens (strain DSM 2475 / Hrk 5), this protein is Small ribosomal subunit protein uS2.